Reading from the N-terminus, the 310-residue chain is 4-hydroxyproline epimerase (310 aa).

The active-site Proton acceptor is the C88. Substrate-binding positions include 89 to 90 (GH), H208, and D232. Catalysis depends on C236, which acts as the Proton donor. Position 237 to 238 (237 to 238 (GT)) interacts with substrate.

The protein belongs to the proline racemase family. As to quaternary structure, homodimer.

It catalyses the reaction trans-4-hydroxy-L-proline = cis-4-hydroxy-D-proline. Functionally, allows intracellular utilization of 4-hydroxyproline, one of the major constituents of host collagen, by converting 4-hydroxy-L-proline to 4-hydroxy-D-proline, which can be further metabolized by intracellular 4-hydroxy-D-proline oxidases. The protein is 4-hydroxyproline epimerase of Burkholderia cenocepacia (strain HI2424).